The primary structure comprises 361 residues: Queuine tRNA-ribosyltransferase (361 aa).

Catalysis depends on Asp-92, which acts as the Proton acceptor. Substrate-binding positions include 92 to 96, Asp-146, Gln-189, and Gly-216; that span reads DSGGF. An RNA binding region spans residues 247–253; sequence GVGKPAD. Asp-266 serves as the catalytic Nucleophile. The interval 271–275 is RNA binding; important for wobble base 34 recognition; the sequence is TRAGR. Zn(2+) contacts are provided by Cys-304, Cys-306, Cys-309, and His-335.

The protein belongs to the queuine tRNA-ribosyltransferase family. As to quaternary structure, homodimer. Within each dimer, one monomer is responsible for RNA recognition and catalysis, while the other monomer binds to the replacement base PreQ1. Requires Zn(2+) as cofactor.

It carries out the reaction 7-aminomethyl-7-carbaguanine + guanosine(34) in tRNA = 7-aminomethyl-7-carbaguanosine(34) in tRNA + guanine. It functions in the pathway tRNA modification; tRNA-queuosine biosynthesis. Its function is as follows. Catalyzes the base-exchange of a guanine (G) residue with the queuine precursor 7-aminomethyl-7-deazaguanine (PreQ1) at position 34 (anticodon wobble position) in tRNAs with GU(N) anticodons (tRNA-Asp, -Asn, -His and -Tyr). Catalysis occurs through a double-displacement mechanism. The nucleophile active site attacks the C1' of nucleotide 34 to detach the guanine base from the RNA, forming a covalent enzyme-RNA intermediate. The proton acceptor active site deprotonates the incoming PreQ1, allowing a nucleophilic attack on the C1' of the ribose to form the product. After dissociation, two additional enzymatic reactions on the tRNA convert PreQ1 to queuine (Q), resulting in the hypermodified nucleoside queuosine (7-(((4,5-cis-dihydroxy-2-cyclopenten-1-yl)amino)methyl)-7-deazaguanosine). The sequence is that of Queuine tRNA-ribosyltransferase from Rickettsia massiliae (strain Mtu5).